Reading from the N-terminus, the 20-residue chain is Implantin (20 aa).

Belongs to the EF-1-beta/EF-1-delta family. Post-translationally, phosphorylated. In terms of tissue distribution, uterus and embryo.

It localises to the cytoplasm. It is found in the nucleus. Functionally, binds DNA. The chain is Implantin from Mus musculus (Mouse).